Reading from the N-terminus, the 58-residue chain is Large ribosomal subunit protein uL30 (58 aa).

Belongs to the universal ribosomal protein uL30 family. Part of the 50S ribosomal subunit.

The protein is Large ribosomal subunit protein uL30 of Pseudomonas fluorescens (strain ATCC BAA-477 / NRRL B-23932 / Pf-5).